The chain runs to 226 residues: Chalcone--flavanone isomerase (226 aa).

3 residues coordinate substrate: threonine 47, asparagine 112, and serine 189.

The protein belongs to the chalcone isomerase family.

It carries out the reaction a chalcone = a flavanone.. The protein operates within secondary metabolite biosynthesis; flavonoid biosynthesis. Its function is as follows. Catalyzes the intramolecular cyclization of bicyclic chalcones into tricyclic (S)-flavanones. Responsible for the isomerization of 4,2',4',6'-tetrahydroxychalcone (also termed chalcone) into naringenin. This Allium cepa (Onion) protein is Chalcone--flavanone isomerase (CHI).